The chain runs to 278 residues: Probable septum site-determining protein MinC (278 aa).

This sequence belongs to the MinC family. In terms of assembly, interacts with MinD and FtsZ.

In terms of biological role, cell division inhibitor that blocks the formation of polar Z ring septums. Rapidly oscillates between the poles of the cell to destabilize FtsZ filaments that have formed before they mature into polar Z rings. Prevents FtsZ polymerization. This is Probable septum site-determining protein MinC from Gloeobacter violaceus (strain ATCC 29082 / PCC 7421).